The following is a 777-amino-acid chain: Santalene and bergamotene synthase, chloroplastic (777 aa).

The transit peptide at 1–36 (MIVGYRSTIITLSHPKLGNGKTISSNAIFQRSCRVR) directs the protein to the chloroplast. Residues Asp530 and Asp534 each coordinate Mg(2+). The short motif at 530–534 (DDQFD) is the DDXXD motif element.

This sequence belongs to the terpene synthase family. Tpse subfamily. Mg(2+) serves as cofactor. Mn(2+) is required as a cofactor.

It is found in the plastid. The protein localises to the chloroplast. The enzyme catalyses (2Z,6Z)-farnesyl diphosphate = (+)-alpha-santalene + diphosphate. It carries out the reaction (2Z,6Z)-farnesyl diphosphate = (+)-endo-beta-bergamotene + diphosphate. The catalysed reaction is (2Z,6Z)-farnesyl diphosphate = (1S,5S,6S)-alpha-bergamotene + diphosphate. In terms of biological role, (2Z,6Z)-farnesyl diphosphate cyclizing enzyme. Produces (+)-alpha-santalene, (+)-endo-beta-bergamotene, (-)-endo-alpha-bergamotene, and at lower amounts, (-)exo-alpha-bergamotene and (+)-epi-beta-santalene. Not able to use geranyl diphosphate, E,E-farnesyl diphosphate or E,E,E-geranylgeranyl diphosphate as substrates, but able to use Neryl diphosphate to make the monoterpene terpineol. The sequence is that of Santalene and bergamotene synthase, chloroplastic (SBS) from Solanum habrochaites (Wild tomato).